Here is a 189-residue protein sequence, read N- to C-terminus: UPF0301 protein PSPA7_0505 (189 aa).

This sequence belongs to the UPF0301 (AlgH) family.

This Pseudomonas paraeruginosa (strain DSM 24068 / PA7) (Pseudomonas aeruginosa (strain PA7)) protein is UPF0301 protein PSPA7_0505.